The primary structure comprises 174 residues: MQTQKGGRPTILPKMYEEPLFSQIIDKIESGCNDREIYTSLHCSAKTFRKWRDDNIKAYDEAKGIARGNLLELAESALASKLTVRTLKETETIYDADGNVEKVKVKEKELDKDSLVAMMVAKAGNPELYNPTEWRRLQQEESSAHDLKAKIEELDDYKLSKYKTPEIEVPEGFE.

Belongs to the skunalikevirus terminase small subunit family.

In terms of biological role, probable terminase small subunit. The terminase lies at a unique vertex of the procapsid and is composed of two subunits, a small terminase subunit and a large terminase subunit. Both terminase subunits heterooligomerize and are docked on the portal protein to form the packaging machine. Once the capsid is packaged with the DNA, the terminase complex is substituted by the connector proteins gp15. The protein is Terminase small subunit of Lactococcus lactis (Lactococcus lactis bacteriophage SK1).